The sequence spans 94 residues: FXYD domain-containing ion transport regulator 6 (94 aa).

The signal sequence occupies residues 1-17 (METVLILCSLLAPVVLA). Over 18–34 (SAAEKEKEKDPFYYDYQ) the chain is Extracellular. The helical transmembrane segment at 35-57 (TLRIGGLVFAVVLFSVGILLILS) threads the bilayer. At 58–94 (RRCKCSFNQKPRAPGDEEAQVENLITTNAAEPQKAEN) the chain is on the cytoplasmic side.

It belongs to the FXYD family. In terms of assembly, regulatory subunit of the sodium/potassium-transporting ATPase which is composed of a catalytic alpha subunit, a non-catalytic beta subunit and an additional regulatory subunit. The regulatory subunit, a member of the FXYD protein family, modulates the enzymatic activity in a tissue- and isoform-specific way by changing affinities of the Na+/K+-ATPase toward Na(+), K(+) or ATP. As to expression, expressed in the neuronal fibers of the medial part of lateral habenula nucleus, thalamus, hypothalamus, stria terminalis, zona incerta, amygdaloid body and cingulum, olfactory bulb, hippocampus, cerebral cortex and cerebellum. In the cerebellum there is a predominant expression pattern in the granule layer of lobules VI-IX of the posterior lobe. Detected in inner ear.

The protein localises to the cell membrane. Associates with and regulates the activity of the sodium/potassium-transporting ATPase (NKA) which catalyzes the hydrolysis of ATP coupled with the exchange of Na(+) and K(+) ions across the plasma membrane. Decreases the apparent affinity of the transporter for Na(+). In addition to modulating NKA kinetics, may also function as a regulator of NKA localization to the plasma membrane. The chain is FXYD domain-containing ion transport regulator 6 (Fxyd6) from Rattus norvegicus (Rat).